Reading from the N-terminus, the 935-residue chain is Progesterone receptor (935 aa).

Positions 1–50 (MTELKAKGPRAPHVAGSPSSPKVGSPLPCSQAAGPFPGSQTSDTLPEASA) are disordered. An AF3; mediates transcriptional activation region spans residues 1 to 164 (MTELKAKGPR…PATQRVLSPL (164 aa)). The interval 1-568 (MTELKAKGPR…YSFESLPQKI (568 aa)) is modulating, Pro-Rich. The residue at position 20 (S20) is a Phosphoserine. The short motif at 55–59 (LDGLL) is the LXXL motif 1 element. The tract at residues 62–159 (RICQGQDPTD…DPPAAPATQR (98 aa)) is disordered. A Phosphoserine modification is found at S81. Positions 115-119 (LDTLW) match the LXXL motif 2 motif. Phosphoserine occurs at positions 130 and 162. The mediates transcriptional transrepression stretch occupies residues 165–305 (MSRSGGKAGD…LATTVTDFIH (141 aa)). The Nuclear localization signal signature appears at 183-187 (KVLPR). Residues 185–252 (LPRGLSPSRQ…ALGGAAAGGG (68 aa)) form a disordered region. A Phosphoserine modification is found at S190. Polar residues predominate over residues 191 to 203 (PSRQLLLPTSGSP). Position 213 is a phosphoserine (S213). Residues 220 to 231 (EVEEEDGSESED) show a composition bias toward acidic residues. Low complexity predominate over residues 232 to 246 (SAGPLLKGKPRALGG). Phosphoserine; by MAPK1 is present on S294. The disordered stretch occupies residues 331 to 365 (GGAGAASAFAPPRSSPSASSTPVPGGDFPDCAYAP). Low complexity predominate over residues 335–356 (AASAFAPPRSSPSASSTPVPGG). S345 is modified (phosphoserine; by MAPK). Residue K388 forms a Glycyl lysine isopeptide (Lys-Gly) (interchain with G-Cter in SUMO); alternate linkage. A Glycyl lysine isopeptide (Lys-Gly) (interchain with G-Cter in ubiquitin); alternate cross-link involves residue K388. Position 400 is a phosphoserine; by CDK2 (S400). Residues 415–452 (PDFPLGPPPSLPPRAPPPRPGEAAVTAAPASASVSSAS) are disordered. Residues 418–434 (PLGPPPSLPPRAPPPRP) are compositionally biased toward pro residues. The segment covering 435-452 (GEAAVTAAPASASVSSAS) has biased composition (low complexity). The interval 456–548 (STLECILYKA…VYPPYLNYLR (93 aa)) is AF1; mediates transcriptional activation. Residue K533 forms a Glycyl lysine isopeptide (Lys-Gly) (interchain with G-Cter in SUMO) linkage. NR C4-type zinc fingers lie at residues 569–589 (CLIC…CGSC) and 605–629 (CAGR…LRKC). Residues 569–641 (CLICGDEASG…AGMVLGGRKF (73 aa)) constitute a DNA-binding region (nuclear receptor). Residue S678 is modified to Phosphoserine. Positions 681–915 (QDIQLIPPLI…EFPEMMSEVI (235 aa)) constitute an NR LBD domain. Positions 689 to 935 (LINLLLSIEP…MVKPLLFHKK (247 aa)) are AF2; mediates transcriptional activation.

Belongs to the nuclear hormone receptor family. Interacts with SMARD1 and UNC45A. Interacts with CUEDC2; the interaction promotes ubiquitination, decreases sumoylation, and represses transcriptional activity. Interacts with PIAS3; the interaction promotes sumoylation of PR in a hormone-dependent manner, inhibits DNA-binding, and alters nuclear export. Interacts with SP1; the interaction requires ligand-induced phosphorylation on Ser-344 by ERK1/2-MAPK. Interacts with PRMT2. Interacts with NCOA2 and NCOA1. Interacts with KLF9. Interacts with GTF2B. Phosphorylated on multiple serine sites. Several of these sites are hormone-dependent. Phosphorylation on Ser-294 is highly hormone-dependent and modulates ubiquitination and sumoylation on Lys-388. Phosphorylation on Ser-345 requires induction by hormone. Basal phosphorylation on Ser-81, Ser-162, Ser-190 and Ser-400 is increased in response to progesterone and can be phosphorylated in vitro by the CDK2-A1 complex. Increased levels of phosphorylation on Ser-400 also in the presence of EGF, heregulin, IGF, PMA and FBS. Phosphorylation at this site by CDK2 is ligand-independent, and increases nuclear translocation and transcriptional activity. Phosphorylation at Ser-162 and Ser-294, but not at Ser-190, is impaired during the G(2)/M phase of the cell cycle. Phosphorylation on Ser-345 by ERK1/2 MAPK is required for interaction with SP1. In terms of processing, sumoylation is hormone-dependent and represses transcriptional activity. Sumoylation on all three sites is enhanced by PIAS3. Desumoylated by SENP1. Sumoylation on Lys-388, the main site of sumoylation, is repressed by ubiquitination on the same site, and modulated by phosphorylation at Ser-294. Post-translationally, ubiquitination is hormone-dependent and represses sumoylation on the same site. Promoted by MAPK-mediated phosphorylation on Ser-294. Palmitoylated by ZDHHC7 and ZDHHC21. Palmitoylation is required for plasma membrane targeting and for rapid intracellular signaling via ERK and AKT kinases and cAMP generation.

The protein resides in the nucleus. It is found in the cytoplasm. The steroid hormones and their receptors are involved in the regulation of eukaryotic gene expression and affect cellular proliferation and differentiation in target tissues. Transcriptional activator of several progesteron-dependent promoters in a variety of cell types. Involved in activation of SRC-dependent MAPK signaling on hormone stimulation. The polypeptide is Progesterone receptor (PGR) (Pithecia irrorata (Gray monk saki)).